The following is a 215-amino-acid chain: Phosphatidylserine decarboxylase proenzyme (215 aa).

Residue serine 186 is the Schiff-base intermediate with substrate; via pyruvic acid of the active site. Serine 186 carries the pyruvic acid (Ser); by autocatalysis modification.

This sequence belongs to the phosphatidylserine decarboxylase family. PSD-A subfamily. As to quaternary structure, heterodimer of a large membrane-associated beta subunit and a small pyruvoyl-containing alpha subunit. Requires pyruvate as cofactor. Post-translationally, is synthesized initially as an inactive proenzyme. Formation of the active enzyme involves a self-maturation process in which the active site pyruvoyl group is generated from an internal serine residue via an autocatalytic post-translational modification. Two non-identical subunits are generated from the proenzyme in this reaction, and the pyruvate is formed at the N-terminus of the alpha chain, which is derived from the carboxyl end of the proenzyme. The post-translation cleavage follows an unusual pathway, termed non-hydrolytic serinolysis, in which the side chain hydroxyl group of the serine supplies its oxygen atom to form the C-terminus of the beta chain, while the remainder of the serine residue undergoes an oxidative deamination to produce ammonia and the pyruvoyl prosthetic group on the alpha chain.

It localises to the cell membrane. The enzyme catalyses a 1,2-diacyl-sn-glycero-3-phospho-L-serine + H(+) = a 1,2-diacyl-sn-glycero-3-phosphoethanolamine + CO2. It functions in the pathway phospholipid metabolism; phosphatidylethanolamine biosynthesis; phosphatidylethanolamine from CDP-diacylglycerol: step 2/2. Its function is as follows. Catalyzes the formation of phosphatidylethanolamine (PtdEtn) from phosphatidylserine (PtdSer). This Pelagibacter ubique (strain HTCC1062) protein is Phosphatidylserine decarboxylase proenzyme.